Reading from the N-terminus, the 225-residue chain is Cytidylate kinase (225 aa).

11–19 (GPSGAGKGT) contributes to the ATP binding site.

Belongs to the cytidylate kinase family. Type 1 subfamily.

It is found in the cytoplasm. It catalyses the reaction CMP + ATP = CDP + ADP. It carries out the reaction dCMP + ATP = dCDP + ADP. The polypeptide is Cytidylate kinase (Mannheimia succiniciproducens (strain KCTC 0769BP / MBEL55E)).